A 179-amino-acid polypeptide reads, in one-letter code: Alkyl hydroperoxide reductase AhpD (179 aa).

Cysteine 130 serves as the catalytic Proton donor. Cysteine 130 and cysteine 133 are joined by a disulfide. Cysteine 133 (cysteine sulfenic acid (-SOH) intermediate) is an active-site residue.

This sequence belongs to the AhpD family. As to quaternary structure, homotrimer.

It catalyses the reaction N(6)-[(R)-dihydrolipoyl]-L-lysyl-[lipoyl-carrier protein] + a hydroperoxide = N(6)-[(R)-lipoyl]-L-lysyl-[lipoyl-carrier protein] + an alcohol + H2O. Its function is as follows. Antioxidant protein with alkyl hydroperoxidase activity. Required for the reduction of the AhpC active site cysteine residues and for the regeneration of the AhpC enzyme activity. The polypeptide is Alkyl hydroperoxide reductase AhpD (Rhodococcus erythropolis (strain PR4 / NBRC 100887)).